Reading from the N-terminus, the 162-residue chain is NADH-quinone oxidoreductase subunit I (162 aa).

2 4Fe-4S ferredoxin-type domains span residues 54–83 (RRYE…IESE) and 93–122 (TRYD…ETQI). Residues cysteine 63, cysteine 66, cysteine 69, cysteine 73, cysteine 102, cysteine 105, cysteine 108, and cysteine 112 each coordinate [4Fe-4S] cluster.

It belongs to the complex I 23 kDa subunit family. NDH-1 is composed of 14 different subunits. Subunits NuoA, H, J, K, L, M, N constitute the membrane sector of the complex. The cofactor is [4Fe-4S] cluster.

It is found in the cell inner membrane. The catalysed reaction is a quinone + NADH + 5 H(+)(in) = a quinol + NAD(+) + 4 H(+)(out). Functionally, NDH-1 shuttles electrons from NADH, via FMN and iron-sulfur (Fe-S) centers, to quinones in the respiratory chain. The immediate electron acceptor for the enzyme in this species is believed to be ubiquinone. Couples the redox reaction to proton translocation (for every two electrons transferred, four hydrogen ions are translocated across the cytoplasmic membrane), and thus conserves the redox energy in a proton gradient. The sequence is that of NADH-quinone oxidoreductase subunit I from Burkholderia pseudomallei (strain 668).